A 2346-amino-acid polypeptide reads, in one-letter code: Nucleoprotein TPR (2346 aa).

Coiled coils occupy residues 38-190 (DEYC…HKEI), 217-366 (QLQS…NLES), 395-493 (YAKS…SRQV), and 565-596 (KMLL…NNTV). The disordered stretch occupies residues 622 to 649 (VDLDDSNLEPNDSALDTSEQPAANFEES). The span at 629-642 (LEPNDSALDTSEQP) shows a compositional bias: polar residues. Coiled coils occupy residues 643 to 1158 (AANF…IEAL) and 1196 to 1247 (EEGR…DELN). The interval 1187-1655 (LNASGLTAAE…SPRTANVKPM (469 aa)) is interacts with Mad1. Residues Thr1259, Thr1302, Thr1338, and Thr1390 each carry the phosphothreonine modification. Coiled-coil stretches lie at residues 1281–1536 (TDSN…KRTE) and 1579–1627 (SYDE…GSQQ). 2 stretches are compositionally biased toward polar residues: residues 1621-1649 (RQLG…SPRT) and 1657-1667 (GSATVQQSATV). Disordered stretches follow at residues 1621 to 1677 (RQLG…ETPL), 1695 to 1768 (PTSQ…YMPS), and 1821 to 2346 (SPRV…GRFP). The span at 1702–1722 (AGSSTSTSSSSSSSSTSTTSA) shows a compositional bias: low complexity. Residues 1738-1747 (PQQQVHTTGS) are compositionally biased toward polar residues. Composition is skewed to low complexity over residues 1752-1761 (SMASSSPTSS) and 1827-1878 (SSSS…PSSS). Polar residues predominate over residues 1879 to 1891 (NVTTTQAGCSSQG). A compositionally biased stretch (acidic residues) spans 1953-2023 (QEDDIQVVDS…QDNNEVDIEV (71 aa)). Polar residues predominate over residues 2028 to 2080 (MQAQEESQSLDNQAIATASASTQENNQSQAITSGSGESSNPVTLPQAEASNWK). Positions 2082-2091 (AAASTSTAAA) are enriched in low complexity. Polar residues-rich tracts occupy residues 2097-2110 (SVEI…SNFC) and 2142-2159 (GAAS…GESS). Over residues 2165–2184 (KAADDGGDHADGTDNAREAD) the composition is skewed to basic and acidic residues. Polar residues-rich tracts occupy residues 2193–2223 (ATGQ…NQAN) and 2302–2322 (RDTS…NRFA). Over residues 2323 to 2332 (QRTRNRRPIR) the composition is skewed to basic residues.

Belongs to the TPR family. Part of the nuclear pore complex (NPC). Associates with male-specific lethal (MSL) histone acetyltransferase complex. Interacts with Mad2; the interaction is required for efficient recruitment of Mad2 to unattached kinetochore and occurs in a microtubule-independent manner. Interacts with Mad1 (N-terminus). Interacts with Chro, east and Asator; the interaction is part of a macromolecular complex forming the spindle matrix during mitosis. Interacts with Nup98. In males, interacts with histone acetyltransferase mof. Post-translationally, mps1-mediated phosphorylation disrupts interaction with Mad1 during mitosis. In terms of tissue distribution, expressed in salivary glands, fat body, tracheal tube, esophageal tube and anterior ejaculatory duct (at protein level).

It localises to the nucleus. The protein localises to the nucleus matrix. The protein resides in the nucleus lamina. It is found in the nucleus envelope. Its subcellular location is the nucleus membrane. It localises to the nuclear pore complex. The protein localises to the cytoplasm. The protein resides in the cytoskeleton. It is found in the spindle. Its subcellular location is the chromosome. It localises to the centromere. The protein localises to the kinetochore. The protein resides in the midbody. Its function is as follows. Component of the nuclear pore complex (NPC), a complex required for the trafficking across the nuclear envelope. Functions as a scaffolding element in the nuclear phase of the NPC. Plays a role in chromosomal organization and gene expression regulation; stimulates transcription by promoting the formation of an open chromatin environment. Binds chromatin to nucleoporin-associated regions (NARs) that define transcriptionally active regions of the genome. Associates with extended chromosomal regions that alternate between domains of high density binding with those of low occupancy. Preferentially binds to NARs of the male X chromosome. In males, together with Nup153, required for the localization of the male-specific lethal (MSL) histone acetyltransferase complex to the X chromosome and therefore for the transcription of dosage compensation genes. In males, restrains dosage-compensated expression at the level of nascent transcription probably by interacting with the MSL complex and by modulating RNA Polymerase II phosphorylation status and activity. During mitosis forms a gel-like spindle matrix complex together with Skeletor (Skel), Chro, east, and Asator embedding the microtubule spindle apparatus. During interphase localizes Mad1 to the nuclear pore complex and thereby might act as a scaffold to assemble the Mad1-C-Mad2 complex, a heterotetramer that catalyzes the structural conversion of open-Mad2 (O-Mad2) into closed-Mad2 (C-Mad2) which is essential for spindle-assembly checkpoint (SAC). During the metaphase-anaphase transition and before chromosome congression, is phosphorylated by Msp-1; this modification releases Mad1 from the nuclear pore complex and thereby promotes assembly of SAC ensuring a timely and effective recruitment of spindle checkpoint proteins like Mad1, Mad2 and Mps1 to unattached kinetochores (KT). In testes, has a role in stem cell asymmetric division and maintenance via regulation of mitotic spindle assembly checkpoint (SAC) complex. The chain is Nucleoprotein TPR from Drosophila melanogaster (Fruit fly).